The primary structure comprises 415 residues: Histidine--tRNA ligase (415 aa).

It belongs to the class-II aminoacyl-tRNA synthetase family. In terms of assembly, homodimer.

Its subcellular location is the cytoplasm. The enzyme catalyses tRNA(His) + L-histidine + ATP = L-histidyl-tRNA(His) + AMP + diphosphate + H(+). This Rickettsia bellii (strain RML369-C) protein is Histidine--tRNA ligase.